Consider the following 252-residue polypeptide: ATP synthase subunit a (252 aa).

The next 6 membrane-spanning stretches (helical) occupy residues 29–49 (FTNV…FLFI), 87–107 (FFPL…IGLF), 117–137 (IMIT…CGFY), 146–166 (LFVP…IEVI), 196–216 (FIVS…LPLI), and 219–239 (VAIT…FTVL).

This sequence belongs to the ATPase A chain family. In terms of assembly, F-type ATPases have 2 components, CF(1) - the catalytic core - and CF(0) - the membrane proton channel. CF(1) has five subunits: alpha(3), beta(3), gamma(1), delta(1), epsilon(1). CF(0) has three main subunits: a(1), b(2) and c(9-12). The alpha and beta chains form an alternating ring which encloses part of the gamma chain. CF(1) is attached to CF(0) by a central stalk formed by the gamma and epsilon chains, while a peripheral stalk is formed by the delta and b chains.

It is found in the cell inner membrane. Functionally, key component of the proton channel; it plays a direct role in the translocation of protons across the membrane. The chain is ATP synthase subunit a from Bartonella bacilliformis (strain ATCC 35685 / KC583 / Herrer 020/F12,63).